The primary structure comprises 707 residues: E3 ubiquitin-protein ligase MARCHF7 (707 aa).

Met1 is subject to N-acetylmethionine. Disordered regions lie at residues 1–126, 157–279, 294–343, 361–425, and 444–473; these read MESK…QVPR, LMDY…RRTT, FFSR…RASE, SHNH…HIFR, and AANR…GRNT. Residues 17 to 33 are compositionally biased toward low complexity; sequence SSSLSARMMSGSRGSSL. Basic and acidic residues predominate over residues 37–48; sequence YHSRDSSFRLDS. Low complexity predominate over residues 52–65; it reads STSASASASPFQSA. Composition is skewed to polar residues over residues 66–83, 95–126, 189–212, and 254–270; these read WYSE…SQNQ, SCTN…QVPR, NSMS…HQTI, and ISNS…FQES. Over residues 294–303 the composition is skewed to low complexity; sequence FFSRRSSQDS. 3 stretches are compositionally biased toward polar residues: residues 304–336, 373–392, and 412–421; these read LNTR…TSEV, FNQE…SLRN, and IPTSDTSSRS. 2 positions are modified to phosphoserine: Ser317 and Ser389. Over residues 444–470 the composition is skewed to low complexity; it reads AANRPQASAASSSATTGGSTSDSAQGG. An RING-CH-type zinc finger spans residues 544-614; the sequence is SEEEEGDLCR…ELCKEKLELN (71 aa). Zn(2+) contacts are provided by Cys552, Cys555, Cys570, Cys572, His580, Cys583, Cys604, and Cys607. At Thr686 the chain carries Phosphothreonine. Phosphoserine is present on residues Ser687 and Ser691.

The protein resides in the cytoplasm. The catalysed reaction is S-ubiquitinyl-[E2 ubiquitin-conjugating enzyme]-L-cysteine + [acceptor protein]-L-lysine = [E2 ubiquitin-conjugating enzyme]-L-cysteine + N(6)-ubiquitinyl-[acceptor protein]-L-lysine.. Its pathway is protein modification; protein ubiquitination. Functionally, E3 ubiquitin-protein ligase which may specifically enhance the E2 activity of HIP2. E3 ubiquitin ligases accept ubiquitin from an E2 ubiquitin-conjugating enzyme in the form of a thioester and then directly transfer the ubiquitin to targeted substrates. May be involved in T-cell proliferation by regulating LIF secretion. May play a role in lysosome homeostasis. Promotes 'Lys-6', 'Lys-11' and 'Lys-63'-linked mixed polyubiquitination on ATG14 leading to the inhibition of autophagy by impairing the interaction between ATG14 and STX7. Participates in the dopamine-mediated negative regulation of the NLRP3 inflammasome by promoting its uibiquitination and subsequent degradation. The chain is E3 ubiquitin-protein ligase MARCHF7 (MARCHF7) from Pongo abelii (Sumatran orangutan).